The following is a 580-amino-acid chain: MHLSAVFNALLVSVLAAVLWKHVRLREHAATLEEELALGRQATEPAPALRIDYPKALQILMEGGTHMVCTGRTHTDRICRFKWLCYSNEAEEFIFFHGNTSVMLPNLGSRRFQPALLDLSTVEDHNTQYFNFVELPAAALRFMPKPVFVPDVALIANRFNPDNLMHVFHDDLLPLFYTLRQFPGLAHEARLFFMEGWGEGAHFDLYKLLSPKQPLLRAQLKTLGRLLCFSHAFVGLSKITTWYQYGFVQPQGPKANILVSGNEIRQFARFMTEKLNVSHTGVPLGEEYILVFSRTQNRLILNEAELLLALAQEFQMKTVTVSLEDHAFADVVRLVSNASMLVSMHGAQLVTTLFLPRGATVVELFPYAVNPDHYTPYKTLAMLPGMDLQYVAWRNMMPENTVTHPERPWDQGGITHLDRAEQARILQSREVPRHLCCRNPEWLFRIYQDTKVDIPSLIQTIRRVVKGRPGPRKQKWTVGLYPGKVREARCQASVHGASEARLTVSWQIPWNLKYLKVREVKYEVWLQEQGENTYVPYILALQNHTFTENIKPFTTYLVWVRCIFNKILLGPFADVLVCNT.

Over 1–4 the chain is Cytoplasmic; that stretch reads MHLS. The chain crosses the membrane as a helical; Signal-anchor for type II membrane protein span at residues 5–25; sequence AVFNALLVSVLAAVLWKHVRL. Residues 26–580 lie on the Lumenal side of the membrane; it reads REHAATLEEE…PFADVLVCNT (555 aa). Asn-99 and Asn-276 each carry an N-linked (GlcNAc...) asparagine glycan. One can recognise a Fibronectin type-III domain in the interval 488-580; the sequence is ARCQASVHGA…PFADVLVCNT (93 aa).

The protein belongs to the glycosyltransferase 61 family.

It is found in the endoplasmic reticulum membrane. It catalyses the reaction 3-O-(alpha-D-mannosyl)-L-threonyl-[protein] + UDP-N-acetyl-alpha-D-glucosamine = 3-O-(N-acetyl-beta-D-glucosaminyl-(1-&gt;4)-alpha-D-mannosyl)-L-threonyl-[protein] + UDP + H(+). Its pathway is protein modification; protein glycosylation. O-linked mannose beta-1,4-N-acetylglucosaminyltransferase that transfers UDP-N-acetyl-D-glucosamine to the 4-position of the mannose to generate N-acetyl-D-glucosamine-beta-1,4-O-D-mannosylprotein. Involved in the biosynthesis of the phosphorylated O-mannosyl trisaccharide (N-acetylgalactosamine-beta-3-N-acetylglucosamine-beta-4-(phosphate-6-)mannose), a carbohydrate structure present in alpha-dystroglycan (DAG1), which is required for binding laminin G-like domain-containing extracellular proteins with high affinity. This is Protein O-linked-mannose beta-1,4-N-acetylglucosaminyltransferase 2 (POMGNT2) from Pan troglodytes (Chimpanzee).